Here is a 107-residue protein sequence, read N- to C-terminus: ATP synthase peripheral stalk subunit F6, mitochondrial (107 aa).

The transit peptide at 1–31 directs the protein to the mitochondrion; the sequence is MILQRLFRFSVIRSAVSVYLRRNIGVTAVAF. N6-acetyllysine is present on residues Lys40, Lys45, and Lys78. 2 positions are modified to N6-acetyllysine; alternate: Lys93 and Lys98. Residues Lys93 and Lys98 each carry the N6-succinyllysine; alternate modification. Lys104 bears the N6-acetyllysine mark.

It belongs to the eukaryotic ATPase subunit F6 family. Component of the ATP synthase complex composed at least of ATP5F1A/subunit alpha, ATP5F1B/subunit beta, ATP5MC1/subunit c (homooctomer), MT-ATP6/subunit a, MT-ATP8/subunit 8, ATP5ME/subunit e, ATP5MF/subunit f, ATP5MG/subunit g, ATP5MK/subunit k, ATP5MJ/subunit j, ATP5F1C/subunit gamma, ATP5F1D/subunit delta, ATP5F1E/subunit epsilon, ATP5PF/subunit F6, ATP5PB/subunit b, ATP5PD/subunit d, ATP5PO/subunit OSCP. ATP synthase complex consists of a soluble F(1) head domain (subunits alpha(3) and beta(3)) - the catalytic core - and a membrane F(0) domain - the membrane proton channel (subunits c, a, 8, e, f, g, k and j). These two domains are linked by a central stalk (subunits gamma, delta, and epsilon) rotating inside the F1 region and a stationary peripheral stalk (subunits F6, b, d, and OSCP).

It is found in the mitochondrion. Its subcellular location is the mitochondrion inner membrane. In terms of biological role, subunit F6, of the mitochondrial membrane ATP synthase complex (F(1)F(0) ATP synthase or Complex V) that produces ATP from ADP in the presence of a proton gradient across the membrane which is generated by electron transport complexes of the respiratory chain. ATP synthase complex consist of a soluble F(1) head domain - the catalytic core - and a membrane F(1) domain - the membrane proton channel. These two domains are linked by a central stalk rotating inside the F(1) region and a stationary peripheral stalk. During catalysis, ATP synthesis in the catalytic domain of F(1) is coupled via a rotary mechanism of the central stalk subunits to proton translocation. In vivo, can only synthesize ATP although its ATP hydrolase activity can be activated artificially in vitro. Part of the complex F(0) domain. Part of the complex F(0) domain and the peripheric stalk, which acts as a stator to hold the catalytic alpha(3)beta(3) subcomplex and subunit a/ATP6 static relative to the rotary elements. This is ATP synthase peripheral stalk subunit F6, mitochondrial from Pongo abelii (Sumatran orangutan).